A 379-amino-acid chain; its full sequence is Glucose-1-phosphate adenylyltransferase (379 aa).

Alpha-D-glucose 1-phosphate is bound by residues glycine 164, glutamate 179–lysine 180, and serine 190.

It belongs to the bacterial/plant glucose-1-phosphate adenylyltransferase family. Homotetramer.

The enzyme catalyses alpha-D-glucose 1-phosphate + ATP + H(+) = ADP-alpha-D-glucose + diphosphate. Its pathway is glycan biosynthesis; glycogen biosynthesis. Involved in the biosynthesis of ADP-glucose, a building block required for the elongation reactions to produce glycogen. Catalyzes the reaction between ATP and alpha-D-glucose 1-phosphate (G1P) to produce pyrophosphate and ADP-Glc. This Streptococcus agalactiae serotype Ia (strain ATCC 27591 / A909 / CDC SS700) protein is Glucose-1-phosphate adenylyltransferase.